Reading from the N-terminus, the 481-residue chain is METMPNWLMQRAFLTPDRTAIEIEEEKVTFMQLHEKVVSVCGNLTHVGVKRGQKVAVLMKNGMEMITVIHALSYVGAVAVLLNTRLSREELLWQMDDAEVICLVTDQDFEAKDIPVYSFAEVMNGPKEEAFIQEEFSLEEAMTIIYTSGTTGKPKGVILTYGNHWASAVGSSLNLGLRDDDCWLACMPMFHVGGLSLLMKNIMYGMRILLVPKYDADFIHKALQTRGVTIISVVSKMLTDLLERLGAETYPSSLRCMLLGGGPAPKPLLETCVEKGIPVYQTYGMTETSSQICTLSADYMLTKVGSAGKPLFQCQLRIEKDGVVVPAFTEGEIVVKGPNVTGGYFNREDATRETIQNGWLHTGDLGYLDEEGFLYVLDRRSDLIISGGENIYPAQIEEVLLSHPAVAEAGVVGMTDDKWGQVPAAFVVKSGEVTEEEILHFCEEKLAKYKVPKKACFLEELPRNASKKLLRRELRQLVEEM.

The protein belongs to the ATP-dependent AMP-binding enzyme family. MenE subfamily.

It carries out the reaction 2-succinylbenzoate + ATP + CoA = 2-succinylbenzoyl-CoA + AMP + diphosphate. It functions in the pathway quinol/quinone metabolism; 1,4-dihydroxy-2-naphthoate biosynthesis; 1,4-dihydroxy-2-naphthoate from chorismate: step 5/7. The protein operates within quinol/quinone metabolism; menaquinone biosynthesis. In terms of biological role, converts 2-succinylbenzoate (OSB) to 2-succinylbenzoyl-CoA (OSB-CoA). This is 2-succinylbenzoate--CoA ligase from Bacillus cereus (strain Q1).